The sequence spans 270 residues: UPF0354 protein BCE_4835 (270 aa).

The protein belongs to the UPF0354 family.

The protein is UPF0354 protein BCE_4835 of Bacillus cereus (strain ATCC 10987 / NRS 248).